Reading from the N-terminus, the 399-residue chain is Tyrosine--tRNA ligase (399 aa).

An L-tyrosine-binding site is contributed by Tyr36. A 'HIGH' region motif is present at residues 41 to 50; that stretch reads PTAPSLHIGN. L-tyrosine contacts are provided by Tyr166 and Gln170. Positions 226-230 match the 'KMSKS' region motif; the sequence is KMGKS. Lys229 lines the ATP pocket. Residues 332–395 form the S4 RNA-binding domain; sequence TRLVDVIVDL…KKRFVTVQVI (64 aa).

Belongs to the class-I aminoacyl-tRNA synthetase family. TyrS type 1 subfamily. Homodimer.

The protein resides in the cytoplasm. The catalysed reaction is tRNA(Tyr) + L-tyrosine + ATP = L-tyrosyl-tRNA(Tyr) + AMP + diphosphate + H(+). Its function is as follows. Catalyzes the attachment of tyrosine to tRNA(Tyr) in a two-step reaction: tyrosine is first activated by ATP to form Tyr-AMP and then transferred to the acceptor end of tRNA(Tyr). This chain is Tyrosine--tRNA ligase, found in Mycoplasma pneumoniae (strain ATCC 29342 / M129 / Subtype 1) (Mycoplasmoides pneumoniae).